The following is a 418-amino-acid chain: Protein-lysine N-trimethyltransferase SMYD5 (418 aa).

The region spanning Val21 to Leu352 is the SET domain. Residues Pro98–Cys136 form an MYND-type zinc finger. Position 351 (Tyr351) interacts with S-adenosyl-L-methionine. A disordered region spans residues Ala385–Val418.

This sequence belongs to the class V-like SAM-binding methyltransferase superfamily. Interacts with the N-CoR complex. Interacts with EHMT2 and CBX5. Ubiquitinated and degradaed by the proteasome in response to mild hypothermia (32 degrees Celsius), relieving repression of the SP1 gene.

Its subcellular location is the cytoplasm. The enzyme catalyses L-lysyl-[protein] + 3 S-adenosyl-L-methionine = N(6),N(6),N(6)-trimethyl-L-lysyl-[protein] + 3 S-adenosyl-L-homocysteine + 3 H(+). It catalyses the reaction L-lysyl(20)-[histone H4] + 3 S-adenosyl-L-methionine = N(6),N(6),N(6)-trimethyl-L-lysyl(20)-[histone H4] + 3 S-adenosyl-L-homocysteine + 3 H(+). It carries out the reaction L-lysyl(36)-[histone H3] + 3 S-adenosyl-L-methionine = N(6),N(6),N(6)-trimethyl-L-lysyl(36)-[histone H3] + 3 S-adenosyl-L-homocysteine + 3 H(+). Functionally, protein-lysine N-trimethyltransferase that specifically catalyzes trimethylation of 'Lys-22' of the RPL40/eL40 subunit of the 60S ribosome, thereby promoting translation elongation and protein synthesis. May also act as a histone methyltransferase in the context of histone octamers, but not on nucleosome substrates: trimethylates 'Lys-36' of histone H3 and 'Lys-20' of histone H4 to form H3K36me3 and H4K20me3, respectively. The histone methyltransferase activity, which is independent of its SET domain, is however unsure in vivo. In association with the NCoR corepressor complex, involved in the repression of toll-like receptor 4 (TLR4)-target inflammatory genes in macrophages, possibly by catalyzing the formation of H4K20me3 at the gene promoters. Plays an important role in embryonic stem (ES) cell self-renewal and differentiation. Maintains genome stability of ES cells during differentiation through regulation of heterochromatin formation and repression of endogenous repetitive DNA elements by promoting H4K20me3 marks. Acts as a regulator of the hypothermia response: its degradation in response to mild hypothermia relieves the formation of H3K36me3 at gene promoters, allowing expression of the neuroprotective gene SP1. This is Protein-lysine N-trimethyltransferase SMYD5 from Homo sapiens (Human).